A 154-amino-acid chain; its full sequence is Toxin YhaV (154 aa).

Homohexamer; forms a complex with PrlF (SohA) with stoichiometry PrlF(2)-YhaV(4), possibly as a YhaV(2)-PrlF(2)-YhaV(2) complex like the MazFE complex. May dimerize in solution.

Its function is as follows. Toxic component of a type II toxin-antitoxin (TA) system. Has RNase activity in vitro. Acts as a transcription factor. The YhaV/PrlF complex binds the prlF-yhaV operon, probably negatively regulating its expression. The protein is Toxin YhaV (yhaV) of Escherichia coli O6:H1 (strain CFT073 / ATCC 700928 / UPEC).